The chain runs to 204 residues: Auxin-binding protein 4 (204 aa).

A signal peptide spans 1–41; the sequence is MVRRRPATGAAPRPHLAAVGRGLLLASVLAAAASSLPVAES. Cys-43 and Cys-196 are oxidised to a cystine. Positions 98, 100, and 104 each coordinate Zn(2+). A glycan (N-linked (GlcNAc...) asparagine) is linked at Asn-136. Position 147 (His-147) interacts with Zn(2+). Residues 201 to 204 carry the Prevents secretion from ER motif; sequence KDEL.

In terms of assembly, homodimer.

It is found in the endoplasmic reticulum lumen. In terms of biological role, this is probably a receptor for the plant hormone auxin. The protein is Auxin-binding protein 4 (ABP4) of Zea mays (Maize).